A 761-amino-acid polypeptide reads, in one-letter code: Probable ubiquitin carboxyl-terminal hydrolase creB (761 aa).

The tract at residues 1–45 is disordered; the sequence is MGSFLRSFRHNGGSTAPSVGAVPAKKEPQPPPMTPLEKRLLDMGP. Basic and acidic residues predominate over residues 36–45; the sequence is LEKRLLDMGP. A USP domain is found at 55–468; sequence YGMENYGNTC…CAYVLFYQET (414 aa). Cysteine 64 (nucleophile) is an active-site residue. Disordered regions lie at residues 113–146 and 242–269; these read EAEA…DSPE and PLME…KTPN. Over residues 256-269 the composition is skewed to polar residues; the sequence is SVDQSSSTGSKTPN. Residue histidine 419 is the Proton acceptor of the active site. The tract at residues 496–761 is disordered; it reads LKQNGFPQSP…LRKKSFSILS (266 aa). Over residues 555-566 the composition is skewed to pro residues; the sequence is PLSPVPPVPPIP. Positions 577–640 form a coiled coil; the sequence is KNDALAKREE…ASKAEEDRRL (64 aa). A compositionally biased stretch (basic and acidic residues) spans 580 to 649; sequence ALAKREEKER…LSTENGKEKQ (70 aa). Residues 655–666 show a composition bias toward basic residues; that stretch reads RLKRGSKSLSHR. Positions 692 to 710 are enriched in low complexity; sequence SQSGPTSEQQQQQRQQSPP. Pro residues predominate over residues 712–722; it reads HDQPPNSPQPG. The segment covering 725–743 has biased composition (basic and acidic residues); it reads TIREDEQVNHKDSKHERTG. The span at 744–761 shows a compositional bias: basic residues; the sequence is HGKWRSFSLRKKSFSILS.

It belongs to the peptidase C19 family. In terms of assembly, interacts with creA, creC and qutD.

The catalysed reaction is Thiol-dependent hydrolysis of ester, thioester, amide, peptide and isopeptide bonds formed by the C-terminal Gly of ubiquitin (a 76-residue protein attached to proteins as an intracellular targeting signal).. Functionally, ubiquitin thioesterase component of the regulatory network controlling carbon source utilization through ubiquitination and deubiquitination involving creA, creB, creC, creD and acrB. Deubiquitinates the creA catabolic repressor and the quinate permease qutD. Also plays a role in response to carbon starvation and the control of extracellular proteases activity. This chain is Probable ubiquitin carboxyl-terminal hydrolase creB (creB), found in Neosartorya fischeri (strain ATCC 1020 / DSM 3700 / CBS 544.65 / FGSC A1164 / JCM 1740 / NRRL 181 / WB 181) (Aspergillus fischerianus).